We begin with the raw amino-acid sequence, 76 residues long: Beta-defensin 121 (76 aa).

Positions 1–15 are cleaved as a signal peptide; it reads MKLLLLLLTVTLLLA. Disulfide bonds link Cys-23–Cys-50, Cys-30–Cys-44, and Cys-34–Cys-51.

It belongs to the beta-defensin family. As to expression, abundant expression in the male reproductive tract only.

The protein localises to the secreted. In terms of biological role, has antibacterial activity. This chain is Beta-defensin 121 (DEFB121), found in Homo sapiens (Human).